The following is a 108-amino-acid chain: ATP-dependent Clp protease adapter protein ClpS (108 aa).

Positions 1–15 (MPHESSPDSQHEHGV) are enriched in basic and acidic residues. Residues 1 to 22 (MPHESSPDSQHEHGVAVEAARP) form a disordered region.

It belongs to the ClpS family. As to quaternary structure, binds to the N-terminal domain of the chaperone ClpA.

In terms of biological role, involved in the modulation of the specificity of the ClpAP-mediated ATP-dependent protein degradation. The polypeptide is ATP-dependent Clp protease adapter protein ClpS (Stenotrophomonas maltophilia (strain K279a)).